Reading from the N-terminus, the 217-residue chain is Cytidylate kinase (217 aa).

Residue Gly10–Thr18 coordinates ATP.

This sequence belongs to the cytidylate kinase family. Type 1 subfamily.

The protein resides in the cytoplasm. It carries out the reaction CMP + ATP = CDP + ADP. The catalysed reaction is dCMP + ATP = dCDP + ADP. This is Cytidylate kinase from Clostridium botulinum (strain ATCC 19397 / Type A).